We begin with the raw amino-acid sequence, 569 residues long: Isocitrate dehydrogenase kinase/phosphatase (569 aa).

Residues 316–322 (APGVRGM) and lysine 337 contribute to the ATP site. Residue aspartate 372 is part of the active site.

The protein belongs to the AceK family.

Its subcellular location is the cytoplasm. The enzyme catalyses L-seryl-[isocitrate dehydrogenase] + ATP = O-phospho-L-seryl-[isocitrate dehydrogenase] + ADP + H(+). Functionally, bifunctional enzyme which can phosphorylate or dephosphorylate isocitrate dehydrogenase (IDH) on a specific serine residue. This is a regulatory mechanism which enables bacteria to bypass the Krebs cycle via the glyoxylate shunt in response to the source of carbon. When bacteria are grown on glucose, IDH is fully active and unphosphorylated, but when grown on acetate or ethanol, the activity of IDH declines drastically concomitant with its phosphorylation. This Pseudomonas putida (strain W619) protein is Isocitrate dehydrogenase kinase/phosphatase.